Consider the following 152-residue polypeptide: Gene 57 protein (152 aa).

Residues 57–137 form the Toprim domain; sequence RDMAITEGEI…IPMPEGEDVN (81 aa).

In Mycobacterium (Mycobacteriophage D29), this protein is Gene 57 protein (57).